Here is a 1153-residue protein sequence, read N- to C-terminus: uncharacterized protein (1153 aa).

Residues 1–18 (MNKNIFITLLISLLLLSG) form the signal peptide. Residue Cys-19 is the site of N-palmitoyl cysteine attachment. Cys-19 carries S-diacylglycerol cysteine lipidation. 4 helical membrane passes run 289-309 (VSAI…IGNI), 393-413 (LGFI…FLIF), 422-442 (ALIT…FMLF), and 457-477 (ISYA…SMII).

The protein belongs to the TrbL/VirB6 family.

It is found in the cell membrane. This is an uncharacterized protein from Rickettsia conorii (strain ATCC VR-613 / Malish 7).